The following is a 184-amino-acid chain: ATP synthase subunit b, chloroplastic (184 aa).

A helical membrane pass occupies residues 29 to 49 (TNLINLGVVLGLLVYFGKGVL).

It belongs to the ATPase B chain family. In terms of assembly, F-type ATPases have 2 components, F(1) - the catalytic core - and F(0) - the membrane proton channel. F(1) has five subunits: alpha(3), beta(3), gamma(1), delta(1), epsilon(1). F(0) has four main subunits: a(1), b(1), b'(1) and c(10-14). The alpha and beta chains form an alternating ring which encloses part of the gamma chain. F(1) is attached to F(0) by a central stalk formed by the gamma and epsilon chains, while a peripheral stalk is formed by the delta, b and b' chains.

The protein resides in the plastid. The protein localises to the chloroplast thylakoid membrane. Functionally, f(1)F(0) ATP synthase produces ATP from ADP in the presence of a proton or sodium gradient. F-type ATPases consist of two structural domains, F(1) containing the extramembraneous catalytic core and F(0) containing the membrane proton channel, linked together by a central stalk and a peripheral stalk. During catalysis, ATP synthesis in the catalytic domain of F(1) is coupled via a rotary mechanism of the central stalk subunits to proton translocation. In terms of biological role, component of the F(0) channel, it forms part of the peripheral stalk, linking F(1) to F(0). This chain is ATP synthase subunit b, chloroplastic, found in Anthoceros angustus (Hornwort).